We begin with the raw amino-acid sequence, 388 residues long: tRNA (guanine(26)-N(2))-dimethyltransferase (388 aa).

The Trm1 methyltransferase domain occupies 4-383; sequence KTIVEGTTKV…APITEIKEII (380 aa). The S-adenosyl-L-methionine site is built by R41, R78, D94, and A123. Zn(2+) is bound by residues C251, C254, C271, and C274.

This sequence belongs to the class I-like SAM-binding methyltransferase superfamily. Trm1 family.

The enzyme catalyses guanosine(26) in tRNA + 2 S-adenosyl-L-methionine = N(2)-dimethylguanosine(26) in tRNA + 2 S-adenosyl-L-homocysteine + 2 H(+). Its function is as follows. Dimethylates a single guanine residue at position 26 of a number of tRNAs using S-adenosyl-L-methionine as donor of the methyl groups. This Methanosarcina barkeri (strain Fusaro / DSM 804) protein is tRNA (guanine(26)-N(2))-dimethyltransferase.